The chain runs to 593 residues: 2-succinyl-5-enolpyruvyl-6-hydroxy-3-cyclohexene-1-carboxylate synthase (593 aa).

This sequence belongs to the TPP enzyme family. MenD subfamily. As to quaternary structure, homodimer. The cofactor is Mg(2+). It depends on Mn(2+) as a cofactor. Thiamine diphosphate serves as cofactor.

It catalyses the reaction isochorismate + 2-oxoglutarate + H(+) = 5-enolpyruvoyl-6-hydroxy-2-succinyl-cyclohex-3-ene-1-carboxylate + CO2. Its pathway is quinol/quinone metabolism; 1,4-dihydroxy-2-naphthoate biosynthesis; 1,4-dihydroxy-2-naphthoate from chorismate: step 2/7. It functions in the pathway quinol/quinone metabolism; menaquinone biosynthesis. In terms of biological role, catalyzes the thiamine diphosphate-dependent decarboxylation of 2-oxoglutarate and the subsequent addition of the resulting succinic semialdehyde-thiamine pyrophosphate anion to isochorismate to yield 2-succinyl-5-enolpyruvyl-6-hydroxy-3-cyclohexene-1-carboxylate (SEPHCHC). This Pelodictyon phaeoclathratiforme (strain DSM 5477 / BU-1) protein is 2-succinyl-5-enolpyruvyl-6-hydroxy-3-cyclohexene-1-carboxylate synthase.